The chain runs to 408 residues: Arginine biosynthesis bifunctional protein ArgJ (408 aa).

Positions 158, 184, 195, 281, 403, and 408 each coordinate substrate. Thr195 acts as the Nucleophile in catalysis.

It belongs to the ArgJ family. As to quaternary structure, heterotetramer of two alpha and two beta chains.

The protein localises to the cytoplasm. The enzyme catalyses N(2)-acetyl-L-ornithine + L-glutamate = N-acetyl-L-glutamate + L-ornithine. The catalysed reaction is L-glutamate + acetyl-CoA = N-acetyl-L-glutamate + CoA + H(+). It participates in amino-acid biosynthesis; L-arginine biosynthesis; L-ornithine and N-acetyl-L-glutamate from L-glutamate and N(2)-acetyl-L-ornithine (cyclic): step 1/1. Its pathway is amino-acid biosynthesis; L-arginine biosynthesis; N(2)-acetyl-L-ornithine from L-glutamate: step 1/4. Catalyzes two activities which are involved in the cyclic version of arginine biosynthesis: the synthesis of N-acetylglutamate from glutamate and acetyl-CoA as the acetyl donor, and of ornithine by transacetylation between N(2)-acetylornithine and glutamate. The polypeptide is Arginine biosynthesis bifunctional protein ArgJ (Bacillus thuringiensis subsp. konkukian (strain 97-27)).